We begin with the raw amino-acid sequence, 66 residues long: Large ribosomal subunit protein bL35 (66 aa).

A compositionally biased stretch (basic residues) spans 1–26 (MPKMKTHRGAAKRVKRTGSGKLKRSR). Positions 1–49 (MPKMKTHRGAAKRVKRTGSGKLKRSRAFTSHLFANKSTKQKRKLRKASL) are disordered.

This sequence belongs to the bacterial ribosomal protein bL35 family.

The protein is Large ribosomal subunit protein bL35 of Staphylococcus saprophyticus subsp. saprophyticus (strain ATCC 15305 / DSM 20229 / NCIMB 8711 / NCTC 7292 / S-41).